The primary structure comprises 570 residues: Glutamate--tRNA ligase (570 aa).

The short motif at 107-117 (PNPDFVLHLGS) is the 'HIGH' region element.

The protein belongs to the class-I aminoacyl-tRNA synthetase family. Glutamate--tRNA ligase type 2 subfamily.

It is found in the cytoplasm. The enzyme catalyses tRNA(Glu) + L-glutamate + ATP = L-glutamyl-tRNA(Glu) + AMP + diphosphate. Functionally, catalyzes the attachment of glutamate to tRNA(Glu) in a two-step reaction: glutamate is first activated by ATP to form Glu-AMP and then transferred to the acceptor end of tRNA(Glu). The chain is Glutamate--tRNA ligase from Pyrobaculum calidifontis (strain DSM 21063 / JCM 11548 / VA1).